We begin with the raw amino-acid sequence, 138 residues long: Small ribosomal subunit protein uS11c (138 aa).

Positions 1–23 (MAKPIPRIGSRRNGRIGSRKSAR) are disordered. The span at 9 to 23 (GSRRNGRIGSRKSAR) shows a compositional bias: basic residues.

This sequence belongs to the universal ribosomal protein uS11 family. In terms of assembly, part of the 30S ribosomal subunit.

It localises to the plastid. Its subcellular location is the chloroplast. The sequence is that of Small ribosomal subunit protein uS11c from Vitis vinifera (Grape).